The sequence spans 739 residues: MSLMLEPNPTQIKEERIYAEMGLTDEEFAMVEKILGRLPNYTETGLFSVMWSEHCSYKNSKPVLRKFPTTGERVLQGPGEGAGIVDIGDNQAVVFKMESHNHPSAIEPYQGAATGVGGIIRDVFSMGARPVALLNSLRFGELQSPRVKYLFEEVVAGIAGYGNCIGIPTVGGEVQFDPCYEGNPLVNAMCVGLINHEDIKKGQAHGAGNTVMYVGASTGRDGIHGATFASEELSESSEAKRPAVQVGDPFMEKLLIEACLELIQSDALVGIQDMGAAGLTSSSAEMASKAGMGIEMYLDDVPQRETGMTPYEMMLSESQERMLIVVKKGREQEIVDLFEKYGLAAVTMGKVTEDKMLRLFHKGEMVAEVPADALAEEAPIYHKPSKEAAYFAEFQQMKMETPKIENYKETLFALLQQPTIASKEWVYDQYDYQVRTSTVVTPGSDAAVVRVRGTEKGLAMTTDCNSRYIYLDPEMGGKIAVAEAARNIVCSGGEPLAITDCLNFGNPEKPEIFWQIEKSVDGMSEACRTLQTPVIGGNVSMYNERSGEAVYPTPTVGMVGLVHDLKHVTTQEFKQAGDLVYVIGETKAEFGGSELQKMLHGKIFGQSPSIDLGVELKRQKQVLAAIQAGLVQSAHDVAEGGLAVAISESAIGANGLGATVKLDGEATAALFAESQSRFVITVKRENKEVFEKAVEAIQVGEVTNTNEVTIHNEENEVLLTANVDEMRKAWKGAIPCLLK.

Residue H54 is part of the active site. Residues Y57 and K96 each coordinate ATP. E98 is a binding site for Mg(2+). Residues 99–102 and R121 each bind substrate; that span reads SHNH. H100 functions as the Proton acceptor in the catalytic mechanism. D122 is a binding site for Mg(2+). Residue Q245 coordinates substrate. D273 lines the Mg(2+) pocket. 317 to 319 provides a ligand contact to substrate; the sequence is ESQ. The ATP site is built by D500 and G537. N538 contributes to the Mg(2+) binding site. Residue S540 participates in substrate binding.

The protein belongs to the FGAMS family. Monomer. Part of the FGAM synthase complex composed of 1 PurL, 1 PurQ and 2 PurS subunits.

The protein localises to the cytoplasm. The catalysed reaction is N(2)-formyl-N(1)-(5-phospho-beta-D-ribosyl)glycinamide + L-glutamine + ATP + H2O = 2-formamido-N(1)-(5-O-phospho-beta-D-ribosyl)acetamidine + L-glutamate + ADP + phosphate + H(+). It functions in the pathway purine metabolism; IMP biosynthesis via de novo pathway; 5-amino-1-(5-phospho-D-ribosyl)imidazole from N(2)-formyl-N(1)-(5-phospho-D-ribosyl)glycinamide: step 1/2. Its function is as follows. Part of the phosphoribosylformylglycinamidine synthase complex involved in the purines biosynthetic pathway. Catalyzes the ATP-dependent conversion of formylglycinamide ribonucleotide (FGAR) and glutamine to yield formylglycinamidine ribonucleotide (FGAM) and glutamate. The FGAM synthase complex is composed of three subunits. PurQ produces an ammonia molecule by converting glutamine to glutamate. PurL transfers the ammonia molecule to FGAR to form FGAM in an ATP-dependent manner. PurS interacts with PurQ and PurL and is thought to assist in the transfer of the ammonia molecule from PurQ to PurL. In Bacillus cereus (strain ZK / E33L), this protein is Phosphoribosylformylglycinamidine synthase subunit PurL.